Reading from the N-terminus, the 548-residue chain is Thermosome subunit alpha (548 aa).

Positions threonine 527–methionine 548 are disordered. Residues glycine 531–methionine 548 show a composition bias toward gly residues.

It belongs to the TCP-1 chaperonin family. In terms of assembly, forms a Heterooligomeric complex of two stacked eight-membered rings.

In terms of biological role, molecular chaperone; binds unfolded polypeptides in vitro, and has a weak ATPase activity. This is Thermosome subunit alpha (thsA) from Thermococcus sp. (strain JCM 11816 / KS-1).